The primary structure comprises 146 residues: UPF0178 protein BCAH187_A3092 (146 aa).

This sequence belongs to the UPF0178 family.

The sequence is that of UPF0178 protein BCAH187_A3092 from Bacillus cereus (strain AH187).